Consider the following 462-residue polypeptide: Probable DNA-directed RNA polymerase subunit 343L (462 aa).

It belongs to the RNA polymerase beta' chain family.

It carries out the reaction RNA(n) + a ribonucleoside 5'-triphosphate = RNA(n+1) + diphosphate. In terms of biological role, component of the DNA-dependent RNA polymerase that catalyzes the transcription in the cytoplasm of viral DNA into RNA using the four ribonucleoside triphosphates as substrates. The protein is Probable DNA-directed RNA polymerase subunit 343L of Acheta domesticus (House cricket).